We begin with the raw amino-acid sequence, 268 residues long: Phosphatidylglycerol--prolipoprotein diacylglyceryl transferase (268 aa).

A run of 7 helical transmembrane segments spans residues 23-43 (IGLR…RWLA), 62-82 (LLFN…VFFY), 97-117 (VWEG…AMIW), 132-152 (FVAP…FINL), 179-199 (SQLY…NIFI), 206-226 (ASVA…VEYV), and 241-261 (GQAL…WAYS). Residue Arg145 participates in a 1,2-diacyl-sn-glycero-3-phospho-(1'-sn-glycerol) binding.

It belongs to the Lgt family.

The protein resides in the cell inner membrane. It carries out the reaction L-cysteinyl-[prolipoprotein] + a 1,2-diacyl-sn-glycero-3-phospho-(1'-sn-glycerol) = an S-1,2-diacyl-sn-glyceryl-L-cysteinyl-[prolipoprotein] + sn-glycerol 1-phosphate + H(+). It participates in protein modification; lipoprotein biosynthesis (diacylglyceryl transfer). Functionally, catalyzes the transfer of the diacylglyceryl group from phosphatidylglycerol to the sulfhydryl group of the N-terminal cysteine of a prolipoprotein, the first step in the formation of mature lipoproteins. The chain is Phosphatidylglycerol--prolipoprotein diacylglyceryl transferase from Haemophilus influenzae (strain 86-028NP).